Here is a 345-residue protein sequence, read N- to C-terminus: 2-oxoglutarate-dependent ethylene/succinate-forming enzyme (345 aa).

One can recognise a Fe2OG dioxygenase domain in the interval 167–288 (GWHHMRVLRF…RFAMAYFHEP (122 aa)). Residues His-191 and His-270 each contribute to the Fe cation site.

It belongs to the iron/ascorbate-dependent oxidoreductase family. As to quaternary structure, monomer. The cofactor is Fe(2+).

The enzyme catalyses 2-oxoglutarate + O2 + 2 H(+) = ethene + 3 CO2 + H2O. The catalysed reaction is L-arginine + 2-oxoglutarate + O2 = guanidine + L-glutamate 5-semialdehyde + succinate + CO2. It functions in the pathway alkene biosynthesis; ethylene biosynthesis via 2-oxoglutarate. Functionally, simultaneously catalyzes two reactions, namely formation of ethylene and of succinate from 2-oxoglutarate. The chain is 2-oxoglutarate-dependent ethylene/succinate-forming enzyme (efe) from Ralstonia nicotianae (strain ATCC BAA-1114 / GMI1000) (Ralstonia solanacearum).